A 66-amino-acid chain; its full sequence is Large ribosomal subunit protein uL29 (66 aa).

Belongs to the universal ribosomal protein uL29 family. Part of the 50S ribosomal subunit.

In Thermococcus kodakarensis (strain ATCC BAA-918 / JCM 12380 / KOD1) (Pyrococcus kodakaraensis (strain KOD1)), this protein is Large ribosomal subunit protein uL29.